Consider the following 242-residue polypeptide: Putative serine/threonine-protein kinase (242 aa).

One can recognise a Protein kinase domain in the interval 49–242 (FSSKNKVGEG…KSDVYSFGVL (194 aa)). ATP is bound by residues 55–63 (VGEGGCGAV) and K77. Residue D177 is the Proton acceptor of the active site.

Belongs to the protein kinase superfamily. Ser/Thr protein kinase family.

It catalyses the reaction L-seryl-[protein] + ATP = O-phospho-L-seryl-[protein] + ADP + H(+). The enzyme catalyses L-threonyl-[protein] + ATP = O-phospho-L-threonyl-[protein] + ADP + H(+). The chain is Putative serine/threonine-protein kinase from Helianthus annuus (Common sunflower).